A 1203-amino-acid chain; its full sequence is MVLLLILSVLLLKEDVRGSAQSSERRVVAHMPGDIIIGALFSVHHQPTVDKVHERKCGAVREQYGIQRVEAMLHTLERINSDPTLLPNITLGCEIRDSCWHSAVALEQSIEFIRDSLISSEEEEGLVRCVDGSSSFRSKKPIVGVIGPGSSSVAIQVQNLLQLFNIPQIAYSATSMDLSDKTLFKYFMRVVPSDAQQARAMVDIVKRYNWTYVSAVHTEGNYGESGMEAFKDMSAKEGICIAHSYKIYSNAGEQSFDKLLKKLRSHLPKARVVACFCEGMTVRGLLMAMRRLGLAGEFLLLGSDGWADRYDVTDGYQREAVGGITIKLQSPDVKWFDDYYLKLRPETNLRNPWFQEFWQHRFQCRLEGFAQENSKYNKTCNSSLTLRTHHVQDSKMGFVINAIYSMAYGLHNMQMSLCPGYAGLCDAMKPIDGRKLLDSLMKTNFTGVSGDMILFDENGDSPGRYEIMNFKEMGKDYFDYINVGSWDNGELKMDDDEVWSKKNNIIRSVCSEPCEKGQIKVIRKGEVSCCWTCTPCKENEYVFDEYTCKACQLGSWPTDDLTGCDLIPVQYLRWGDPEPIAAVVFACLGLLATLFVTVIFIIYRDTPVVKSSSRELCYIILAGICLGYLCTFCLIAKPKQIYCYLQRIGIGLSPAMSYSALVTKTNRIARILAGSKKKICTKKPRFMSACAQLVIAFILICIQLGIIVALFIMEPPDIMHDYPSIREVYLICNTTNLGVVTPLGYNGLLILSCTFYAFKTRNVPANFNEAKYIAFTMYTTCIIWLAFVPIYFGSNYKIITMCFSVSLSATVALGCMFVPKVYIILAKPERNVRSAFTTSTVVRMHVGDGKSSSAASRSSSLVNLWKRRGSSGETLRYKDRRLAQHKSEIECFTPKGSMGNGGRATMSSSNGKSVTWAQNEKSTRGQHLWQRLSVHINKKENPNQTAVIKPFPKSTENRGPGAAAGGGSGPGVAGAGNAGCTATGGPEPPDAGPKALYDVAEAEESFPAAARPRSPSPISTLSHLAGSAGRTDDDAPSLHSETAARSSSSQGSLMEQISSVVTRFTANISELNSMMLSTAATPGPPGTPICSSYLIPKEIQLPTTMTTFAEIQPLPAIEVTGGAQGATGVSPAQETPTGAESAPGKPDLEELVALTPPSPFRDSVDSGSTTPNSPVSESALCIPSSPKYDTLIIRDYTQSSSSL.

An N-terminal signal peptide occupies residues 1-20 (MVLLLILSVLLLKEDVRGSA). Over 21–579 (QSSERRVVAH…QYLRWGDPEP (559 aa)) the chain is Extracellular. Residues Cys-57 and Cys-99 are joined by a disulfide bond. Tyr-64 lines the L-glutamate pocket. Asn-88 carries an N-linked (GlcNAc...) asparagine glycan. L-glutamate-binding positions include Ser-151 and 172 to 174 (SAT). An N-linked (GlcNAc...) asparagine glycan is attached at Asn-209. Tyr-222 lines the L-glutamate pocket. 8 disulfide bridges follow: Cys-240–Cys-529, Cys-275–Cys-277, Cys-364–Cys-380, Cys-418–Cys-425, Cys-510–Cys-530, Cys-514–Cys-533, Cys-536–Cys-548, and Cys-551–Cys-564. Asp-304 lines the L-glutamate pocket. Asn-377 and Asn-381 each carry an N-linked (GlcNAc...) asparagine glycan. L-glutamate is bound at residue Lys-395. N-linked (GlcNAc...) asparagine glycosylation is present at Asn-444. The chain crosses the membrane as a helical span at residues 580–602 (IAAVVFACLGLLATLFVTVIFII). The Cytoplasmic portion of the chain corresponds to 603–612 (YRDTPVVKSS). Residues 613-635 (SRELCYIILAGICLGYLCTFCLI) traverse the membrane as a helical segment. Residues 636–643 (AKPKQIYC) lie on the Extracellular side of the membrane. Cys-643 and Cys-732 form a disulfide bridge. Residues 644 to 666 (YLQRIGIGLSPAMSYSALVTKTN) traverse the membrane as a helical segment. Topologically, residues 667 to 692 (RIARILAGSKKKICTKKPRFMSACAQ) are cytoplasmic. Residues 693 to 713 (LVIAFILICIQLGIIVALFIM) form a helical membrane-spanning segment. Residues 714–736 (EPPDIMHDYPSIREVYLICNTTN) are Extracellular-facing. Residue Asn-733 is glycosylated (N-linked (GlcNAc...) asparagine). Residues 737 to 758 (LGVVTPLGYNGLLILSCTFYAF) traverse the membrane as a helical segment. Over 759 to 771 (KTRNVPANFNEAK) the chain is Cytoplasmic. The helical transmembrane segment at 772-794 (YIAFTMYTTCIIWLAFVPIYFGS) threads the bilayer. Over 795 to 797 (NYK) the chain is Extracellular. The helical transmembrane segment at 798–819 (IITMCFSVSLSATVALGCMFVP) threads the bilayer. The Cytoplasmic segment spans residues 820–1203 (KVYIILAKPE…RDYTQSSSSL (384 aa)). Ser-860 is modified (phosphoserine). Arg-868 is subject to Omega-N-methylarginine. 3 disordered regions span residues 892–970 (FTPK…GSGP), 1003–1054 (EESF…GSLM), and 1122–1182 (GAQG…ALCI). Over residues 905–920 (TMSSSNGKSVTWAQNE) the composition is skewed to polar residues. Residue Arg-924 is modified to Omega-N-methylarginine. The span at 1007 to 1017 (PAAARPRSPSP) shows a compositional bias: low complexity. A phosphoserine mark is found at Ser-1014 and Ser-1016. Composition is skewed to polar residues over residues 1039–1054 (HSETAARSSSSQGSLM) and 1165–1176 (DSGSTTPNSPVS).

This sequence belongs to the G-protein coupled receptor 3 family. As to quaternary structure, interacts with RYR1, RYR2, ITPR1, SHANK1 and SHANK3. The PPXXF motif binds HOMER1, HOMER2 and HOMER3. Interacts with SIAH1 and TAMALIN. Interacts with NCDN. Interacts with NECAB2. Interacts with CAMK2A. In terms of tissue distribution, widely distributed in neuronal cells of the central nervous system.

The protein localises to the cell membrane. Functionally, G-protein coupled receptor for glutamate. Ligand binding causes a conformation change that triggers signaling via guanine nucleotide-binding proteins (G proteins) and modulates the activity of down-stream effectors. Signaling activates a phosphatidylinositol-calcium second messenger system and generates a calcium-activated chloride current. Plays an important role in the regulation of synaptic plasticity and the modulation of the neural network activity. In Rattus norvegicus (Rat), this protein is Metabotropic glutamate receptor 5 (Grm5).